Reading from the N-terminus, the 196-residue chain is Ribose 1,5-bisphosphate phosphokinase PhnN (196 aa).

It belongs to the ribose 1,5-bisphosphokinase family.

The enzyme catalyses alpha-D-ribose 1,5-bisphosphate + ATP = 5-phospho-alpha-D-ribose 1-diphosphate + ADP. It functions in the pathway metabolic intermediate biosynthesis; 5-phospho-alpha-D-ribose 1-diphosphate biosynthesis; 5-phospho-alpha-D-ribose 1-diphosphate from D-ribose 5-phosphate (route II): step 3/3. In terms of biological role, catalyzes the phosphorylation of ribose 1,5-bisphosphate to 5-phospho-D-ribosyl alpha-1-diphosphate (PRPP). The polypeptide is Ribose 1,5-bisphosphate phosphokinase PhnN (Psychromonas ingrahamii (strain DSM 17664 / CCUG 51855 / 37)).